The sequence spans 1035 residues: FACT complex subunit SPT16 (1035 aa).

Positions 432 to 500 (FLKKEDEEEE…AKRRLTEQKG (69 aa)) form a coiled coil. Disordered regions lie at residues 491-520 (AKRR…ASQV) and 920-1035 (EQGG…KRKK). Over residues 499 to 519 (KGGQQTMKARKSNVSYKNASQ) the composition is skewed to polar residues. Positions 929-985 (PDGEGSDAAEGDSESELDDETFNPSEDEEEEEEDSDEDYSDETEDSVDSEESADSEE) are enriched in acidic residues. Basic and acidic residues predominate over residues 986–1006 (ESGKDWDELEEEARKADRESL).

This sequence belongs to the peptidase M24 family. SPT16 subfamily. In terms of assembly, component of the FACT complex (also called the DUF complex), a stable heterodimer of ssrp1 and supt16h. May also be a component of a ck2-spt16-ssrp1 complex composed of ssrp1, supt16h, csnk2a1, csnk2a2 and csnk2b. The FACT complex may also interact with vcp.

The protein resides in the nucleus. The protein localises to the chromosome. Its function is as follows. Component of the FACT complex, a general chromatin factor that acts to reorganize nucleosomes. The FACT complex is involved in multiple processes that require DNA as a template such as mRNA elongation, DNA replication and DNA repair. During transcription elongation the FACT complex acts as a histone chaperone that both destabilizes and restores nucleosomal structure. It facilitates the passage of RNA polymerase II and transcription by promoting the dissociation of one histone H2A-H2B dimer from the nucleosome, then subsequently promotes the reestablishment of the nucleosome following the passage of RNA polymerase II. The sequence is that of FACT complex subunit SPT16 (supt16h) from Xenopus laevis (African clawed frog).